Here is a 613-residue protein sequence, read N- to C-terminus: Cysteine--tRNA ligase (613 aa).

Residues 1–130 (MSAGAGTPRR…TRGGVARSGN (130 aa)) form a disordered region. 6 consecutive repeat copies span residues 36-49 (PTRGDKKRARRPGV), 50-63 (PTRGDKKRAPRLGV), 64-77 (PARGDKKRARRPGV), 78-91 (PAREDKKRAPRPGV), 92-105 (PTRGDKKRAPRLGV), and 106-119 (PARGDKKRARRPGV). Residues 36–119 (PTRGDKKRAR…DKKRARRPGV (84 aa)) are 6 X 14 AA tandem repeats of P-[TA]-R-G-D-K-K-R-A-[RP]-R-[PL]-G-V. The segment at 148-613 (VTIRLYDTSA…QGPRWSLGSR (466 aa)) is cysteinyl-tRNA synthetase. Cys176 contributes to the Zn(2+) binding site. Residues 178–188 (ATVQAAPHIGH) carry the 'HIGH' region motif. Zn(2+)-binding residues include Cys355, His380, and Glu384. A 'KMSKS' region motif is present at residues 411-415 (KMSKS). An ATP-binding site is contributed by Lys414.

The protein belongs to the class-I aminoacyl-tRNA synthetase family. As to quaternary structure, monomer. Zn(2+) serves as cofactor.

Its subcellular location is the cytoplasm. It catalyses the reaction tRNA(Cys) + L-cysteine + ATP = L-cysteinyl-tRNA(Cys) + AMP + diphosphate. In Streptomyces coelicolor (strain ATCC BAA-471 / A3(2) / M145), this protein is Cysteine--tRNA ligase.